The primary structure comprises 296 residues: mRNA export factor rsm1 (296 aa).

The C3HC-type zinc-finger motif lies at 40 to 174 (PWSREEFLRR…VSTHLPEEMT (135 aa)).

The protein localises to the cytoplasm. The protein resides in the nucleus. Its function is as follows. Involved in the export of mRNA from the nucleus to the cytoplasm. This chain is mRNA export factor rsm1 (rsm1), found in Schizosaccharomyces pombe (strain 972 / ATCC 24843) (Fission yeast).